The primary structure comprises 1270 residues: Myosin-binding protein C, cardiac-type (1270 aa).

N-acetylmethionine is present on M1. The interval 1 to 24 (MPEPGKKPVSAFNKKPRSAEVTAG) is disordered. A phosphoserine mark is found at S47 and S72. Residues 94 to 105 (VTEPAPPEKAES) show a composition bias toward basic and acidic residues. A disordered region spans residues 94 to 152 (VTEPAPPEKAESEVAPGAPEEVPAPATELEESVSSPEGSVSVTQDGSAAEHQGAPDDPI). Residues 106–135 (EVAPGAPEEVPAPATELEESVSSPEGSVSV) are compositionally biased toward low complexity. The region spanning 151-254 (PIGLFLMRPQ…FDSCNFNLTV (104 aa)) is the Ig-like C2-type 1 domain. Residues Q206, H208, E221, and H223 each coordinate Zn(2+). Phosphoserine; by PKA and PKC occurs at positions 273, 282, and 302. 2 positions are modified to phosphoserine: S307 and S423. 4 consecutive Ig-like C2-type domains span residues 358–448 (STAF…VKEP), 449–539 (PVLI…VQEK), 540–629 (KLEV…HFME), and 641–767 (PKIH…VIDV). C432 and C439 are joined by a disulfide. A phosphoserine mark is found at S455 and S546. T603 is modified (phosphothreonine). The tract at residues 683–702 (VTQGKKASAGPHPDAPEDAG) is disordered. Fibronectin type-III domains lie at 770–866 (APAA…IGPP) and 868–963 (EPTH…VQEI). Residues 967-1061 (PRLQLPRHLR…ATLILQIVDK (95 aa)) enclose the Ig-like C2-type 6 domain. Residues 1064-1159 (PPQDIRIVET…TKEPVFIPRP (96 aa)) enclose the Fibronectin type-III 3 domain. Positions 1177–1270 (PSFTQPLANR…ECRLEVRVPQ (94 aa)) constitute an Ig-like C2-type 7 domain. Position 1237 is an omega-N-methylarginine (R1237).

The protein belongs to the immunoglobulin superfamily. MyBP family. Substrate for phosphorylation by PKA and PKC. Reversible phosphorylation appears to modulate contraction. Post-translationally, polyubiquitinated.

In terms of biological role, thick filament-associated protein located in the crossbridge region of vertebrate striated muscle a bands. In vitro it binds MHC, F-actin and native thin filaments, and modifies the activity of actin-activated myosin ATPase. It may modulate muscle contraction or may play a more structural role. This Mus musculus (Mouse) protein is Myosin-binding protein C, cardiac-type (Mybpc3).